A 467-amino-acid polypeptide reads, in one-letter code: H(+)/Cl(-) exchange transporter ClcA (467 aa).

Topologically, residues 1 to 30 (MTKRERIIQSVLVKVPKDAINQFLSHGSTP) are cytoplasmic. Residues 31–67 (ISVLFLAALVGVLAGLVGTYFEIAVHFVSETRTEWLK) traverse the membrane as a helical segment. At 68–74 (SEIGHLL) the chain is on the periplasmic side. A helical transmembrane segment spans residues 75–98 (PLWLAAILISAALAFVGYFLVHRF). The short motif at 104–108 (GSGIP) is the Selectivity filter part_1 element. Chloride is bound at residue Ser105. The helical intramembrane region spans 107–114 (IPEIEGAM). Residues 115–121 (DNIRPVR) lie on the Cytoplasmic side of the membrane. The next 2 helical transmembrane spans lie at 122–139 (WWRVIPVKFFGGMGALGS) and 146–164 (EGPTVQMGGAVGRMVTDIF). The short motif at 144 to 148 (GREGP) is the Selectivity filter part_2 element. Residues 165 to 174 (RVKDDDTRHS) lie on the Cytoplasmic side of the membrane. 2 consecutive intramembrane regions (helical) follow at residues 175-187 (LLASGAAGGLAAA) and 191-199 (PLAGIMFVV). Over 200 to 212 (EEMRPQFRYSLIS) the chain is Cytoplasmic. The chain crosses the membrane as a helical span at residues 213 to 230 (IRAVIISAVMANIVFRAI). Residues 231–250 (NGQDAVITMPQYQPPELKAL) lie on the Periplasmic side of the membrane. The chain crosses the membrane as a helical span at residues 251 to 279 (WLFLLLGGLFGVFGVLFNKLVTVAQDAFV). At 280 to 285 (ALHKND) the chain is on the cytoplasmic side. A helical transmembrane segment spans residues 286–307 (RKRYLITGTCLGGIFGLLLLYV). The Periplasmic portion of the chain corresponds to 308–327 (PELTGGGIHLIPDVTNGNYS). The next 2 membrane-spanning stretches (helical) occupy residues 328 to 347 (VSLLVMLFVGRVLTTLICFG) and 353 to 374 (GIFAPMLALGTLFGYAFGATAK). Positions 353–357 (GIFAP) match the Selectivity filter part_3 motif. Chloride-binding residues include Ile354 and Phe355. Over 375-384 (ILLPDLPIEP) the chain is Periplasmic. An intramembrane region (helical) is located at residues 385 to 399 (GMFAIAGMGALFAAT). Positions 400 to 402 (VRA) form an intramembrane region, note=Loop between two helices. The helical intramembrane region spans 403–414 (PITGILLVIEMT). Residues 415–419 (NNYYL) constitute an intramembrane region (note=Loop between two helices). A helical transmembrane segment spans residues 420 to 436 (ILPLIITSLGAVICAQI). Over 437 to 467 (CGGKPIYSQLLHRTIKNDKLRQQDLPEQQNS) the chain is Cytoplasmic. Residue Tyr443 participates in chloride binding.

This sequence belongs to the chloride channel (TC 2.A.49) family. ClcA subfamily. As to quaternary structure, homodimer.

The protein resides in the cell inner membrane. The enzyme catalyses 2 chloride(in) + H(+)(out) = 2 chloride(out) + H(+)(in). In terms of biological role, proton-coupled chloride transporter. Functions as antiport system and exchanges two chloride ions for 1 proton. Probably acts as an electrical shunt for an outwardly-directed proton pump that is linked to amino acid decarboxylation, as part of the extreme acid resistance (XAR) response. In Vibrio vulnificus (strain CMCP6), this protein is H(+)/Cl(-) exchange transporter ClcA.